Reading from the N-terminus, the 291-residue chain is Protease HtpX homolog (291 aa).

2 helical membrane-spanning segments follow: residues 4–24 (IVLFLATNLAIVLVLSLTMRL) and 39–59 (TSLLIFAAVMGFGGSLISLAI). Position 145 (His-145) interacts with Zn(2+). Residue Glu-146 is part of the active site. His-149 contacts Zn(2+). The next 2 helical transmembrane spans lie at 156-176 (VTLALIQGVVNTFVMFLSRII) and 195-215 (FFVTMIVAELVLGILASIIVM). A Zn(2+)-binding site is contributed by Glu-222.

Belongs to the peptidase M48B family. Requires Zn(2+) as cofactor.

The protein resides in the cell inner membrane. This chain is Protease HtpX homolog, found in Thiobacillus denitrificans (strain ATCC 25259 / T1).